A 724-amino-acid polypeptide reads, in one-letter code: MKKMNLVTAALPYVNNIPHLGNLVQVLSADAFARYSKMSGIETLYICGTDEYGTATETKALIEKTSPLELCNKYYKIHKSIYKWFNIEFDIFGRTTNKHHQDIVQNFFLKLEKNGYIKERETEQFFCNKDSIFLADRYVIGECPECQSIAKGDQCENCSKLLNPIDLINPKCIICKNKPVLKKTNHLYIDLPKIKRKLEKWIKNSTTSKNWNTNALKMTNAFLRDGLKERAITRDLKWGIPVPKKGYENKVFYVWFDAPIGYISITKNLVKNWESWWKNNEQVNLVQFIGKDNILFHTVIFPSIEIGSKENWTILNQLSSSEYLNYENLKFSKSEGTGIFGNDVITTGIPSDVWRFYIYYNRPEKSDFQFMWQDLMERVNTELIDNFSNLVNRVLTFQKKFFGDVIETIEIQNKFWKQIIPKYNKILNLFKKTELKSALKEILKISSLGNKIFQDNEPWKRKDSSPQETKELISNLIYLIRDLSILMMPFIPETSKKIQQFFGNSYQFSTKILGTKSGIKRIEFTEILFNKLEQKKINNLKLKYSGEKNMEEKEQPENLFREKVLLKVVKINKIERNPEAKNLFILKLDDGTNENKQIVSSLEGYYTEKELLGKHIIIVDNLKPAKFRGIKSEGMLIAAEDKNKNFKIIIVEDSIKNPIPGERIILENDQNKDLICPPKIDINKFSKANIVAKDGELKINGINLILEHSKNKILSKDIPNGIVC.

Positions 12–22 (PYVNNIPHLGN) match the 'HIGH' region motif. The Zn(2+) site is built by cysteine 143, cysteine 146, cysteine 155, and cysteine 158. The 'KMSKS' region signature appears at 330 to 334 (KFSKS). Lysine 333 contributes to the ATP binding site. In terms of domain architecture, tRNA-binding spans 560 to 665 (FREKVLLKVV…KNPIPGERII (106 aa)).

This sequence belongs to the class-I aminoacyl-tRNA synthetase family. MetG type 1 subfamily. Homodimer. Zn(2+) serves as cofactor.

Its subcellular location is the cytoplasm. It carries out the reaction tRNA(Met) + L-methionine + ATP = L-methionyl-tRNA(Met) + AMP + diphosphate. Is required not only for elongation of protein synthesis but also for the initiation of all mRNA translation through initiator tRNA(fMet) aminoacylation. This is Methionine--tRNA ligase from Borrelia garinii subsp. bavariensis (strain ATCC BAA-2496 / DSM 23469 / PBi) (Borreliella bavariensis).